The sequence spans 328 residues: D-cysteine desulfhydrase (328 aa).

At K51 the chain carries N6-(pyridoxal phosphate)lysine.

It belongs to the ACC deaminase/D-cysteine desulfhydrase family. In terms of assembly, homodimer. It depends on pyridoxal 5'-phosphate as a cofactor.

It catalyses the reaction D-cysteine + H2O = hydrogen sulfide + pyruvate + NH4(+) + H(+). In terms of biological role, catalyzes the alpha,beta-elimination reaction of D-cysteine and of several D-cysteine derivatives. It could be a defense mechanism against D-cysteine. This chain is D-cysteine desulfhydrase, found in Escherichia coli (strain UTI89 / UPEC).